Reading from the N-terminus, the 1621-residue chain is Cilia- and flagella-associated protein 43 (1621 aa).

WD repeat units follow at residues 97–138 (GAQL…PLCS), 141–180 (DSQT…NQYQ), 293–330 (LLEG…VKLE), 334–373 (NAQE…ETYK), 377–417 (VYSR…SVSS), 464–503 (LYCV…SFQV), 634–673 (GSQL…TMAQ), and 679–721 (YHNG…SSRL). Coiled-coil stretches lie at residues 792–812 (IKRK…AEKE), 850–870 (TEEQ…VRQE), 1026–1046 (CRQK…IQEI), 1098–1118 (VEEA…ALDD), 1150–1177 (TEEE…YSKE), 1362–1389 (DEKM…FQLD), 1451–1514 (IFQL…QEKQ), and 1591–1611 (AKIQ…LRMK).

This sequence belongs to the CFAP43 family.

The protein localises to the cytoplasm. It localises to the cytoskeleton. It is found in the cilium axoneme. Involved in the regulation of the beating frequency of motile cilia in multiciliated cells of the larval epidermis. This Xenopus laevis (African clawed frog) protein is Cilia- and flagella-associated protein 43 (cfap43).